Here is a 262-residue protein sequence, read N- to C-terminus: UPF0758 protein R01728 (262 aa).

A disordered region spans residues 23-44; it reads PEKRTRNSPATAPAPATDTHYH. A compositionally biased stretch (low complexity) spans 31–40; it reads PATAPAPATD. The 123-residue stretch at 140-262 folds into the MPN domain; the sequence is VLSSWSAVID…HVSLKGLRLF (123 aa). Zn(2+)-binding residues include His-211, His-213, and Asp-224. Residues 211–224 carry the JAMM motif motif; that stretch reads HNHPSGDPTPSRAD.

This sequence belongs to the UPF0758 family.

The sequence is that of UPF0758 protein R01728 from Rhizobium meliloti (strain 1021) (Ensifer meliloti).